The chain runs to 234 residues: 7-cyano-7-deazaguanine synthase (234 aa).

7 to 17 provides a ligand contact to ATP; sequence LSGGLDSAVCM. Residues cysteine 197, cysteine 208, cysteine 211, and cysteine 214 each coordinate Zn(2+).

It belongs to the QueC family. Zn(2+) is required as a cofactor.

The catalysed reaction is 7-carboxy-7-deazaguanine + NH4(+) + ATP = 7-cyano-7-deazaguanine + ADP + phosphate + H2O + H(+). It participates in purine metabolism; 7-cyano-7-deazaguanine biosynthesis. Its function is as follows. Catalyzes the ATP-dependent conversion of 7-carboxy-7-deazaguanine (CDG) to 7-cyano-7-deazaguanine (preQ(0)). The sequence is that of 7-cyano-7-deazaguanine synthase from Methanococcus aeolicus (strain ATCC BAA-1280 / DSM 17508 / OCM 812 / Nankai-3).